Here is a 151-residue protein sequence, read N- to C-terminus: D-ribose pyranase 1 (151 aa).

The Proton donor role is filled by H20. Substrate contacts are provided by residues D28, H98, and 121-123 (WGN).

It belongs to the RbsD / FucU family. RbsD subfamily. Homodecamer.

The protein resides in the cytoplasm. The enzyme catalyses beta-D-ribopyranose = beta-D-ribofuranose. The protein operates within carbohydrate metabolism; D-ribose degradation; D-ribose 5-phosphate from beta-D-ribopyranose: step 1/2. Catalyzes the interconversion of beta-pyran and beta-furan forms of D-ribose. In Streptomyces griseus subsp. griseus (strain JCM 4626 / CBS 651.72 / NBRC 13350 / KCC S-0626 / ISP 5235), this protein is D-ribose pyranase 1.